A 701-amino-acid polypeptide reads, in one-letter code: 2-isopropylmalate synthase (701 aa).

Residues 1-40 form a disordered region; that stretch reads MTTSESPDAYTESFGAHTIVKPAGPPRVGQPSWNPQRASS. The span at 31–40 shows a compositional bias: polar residues; the sequence is PSWNPQRASS. Residues 72-346 form the Pyruvate carboxyltransferase domain; sequence PLWCAVDLRD…DPQIDFSNID (275 aa). Residues aspartate 81, histidine 285, histidine 287, and asparagine 321 each coordinate Mg(2+). Positions 491–701 are regulatory domain; the sequence is PVRPLERIRQ…VVSAVNRAAR (211 aa). Residues 575–593 form a VNTR1 repeat; the sequence is VTIASPAQPGEAGRHASDP. Positions 581–670 are disordered; that stretch reads AQPGEAGRHA…EAGRHASDPV (90 aa). The VNTR2 repeat unit spans residues 594 to 612; it reads VTIASPAQPGEAGRHASDP. The VNTR3 repeat unit spans residues 613–631; sequence VTIASPAQPGEAGRHASDP. Residues 632–650 form a VNTR4 repeat; that stretch reads VTIASPAQPGEAGRHASDP. One copy of the VNTR5 repeat lies at 651 to 669; sequence VTIASPAQPGEAGRHASDP.

This sequence belongs to the alpha-IPM synthase/homocitrate synthase family. LeuA type 2 subfamily. Homodimer. Requires Mg(2+) as cofactor.

The protein localises to the cytoplasm. The enzyme catalyses 3-methyl-2-oxobutanoate + acetyl-CoA + H2O = (2S)-2-isopropylmalate + CoA + H(+). Its pathway is amino-acid biosynthesis; L-leucine biosynthesis; L-leucine from 3-methyl-2-oxobutanoate: step 1/4. In terms of biological role, catalyzes the condensation of the acetyl group of acetyl-CoA with 3-methyl-2-oxobutanoate (2-ketoisovalerate) to form 3-carboxy-3-hydroxy-4-methylpentanoate (2-isopropylmalate). The sequence is that of 2-isopropylmalate synthase from Mycobacterium bovis (strain ATCC BAA-935 / AF2122/97).